Reading from the N-terminus, the 158-residue chain is NAD(P)H-quinone oxidoreductase subunit J, chloroplastic (158 aa).

It belongs to the complex I 30 kDa subunit family. As to quaternary structure, NDH is composed of at least 16 different subunits, 5 of which are encoded in the nucleus.

It localises to the plastid. The protein localises to the chloroplast thylakoid membrane. It carries out the reaction a plastoquinone + NADH + (n+1) H(+)(in) = a plastoquinol + NAD(+) + n H(+)(out). The enzyme catalyses a plastoquinone + NADPH + (n+1) H(+)(in) = a plastoquinol + NADP(+) + n H(+)(out). Functionally, NDH shuttles electrons from NAD(P)H:plastoquinone, via FMN and iron-sulfur (Fe-S) centers, to quinones in the photosynthetic chain and possibly in a chloroplast respiratory chain. The immediate electron acceptor for the enzyme in this species is believed to be plastoquinone. Couples the redox reaction to proton translocation, and thus conserves the redox energy in a proton gradient. The sequence is that of NAD(P)H-quinone oxidoreductase subunit J, chloroplastic from Illicium oligandrum (Star anise).